The chain runs to 460 residues: Cobyrinate a,c-diamide synthase (460 aa).

Residues 248–440 (KIAVARDAAF…THFHFGSSTK (193 aa)) enclose the GATase cobBQ-type domain. The active-site Nucleophile is cysteine 331.

This sequence belongs to the CobB/CbiA family. Mg(2+) serves as cofactor.

It catalyses the reaction cob(II)yrinate + 2 L-glutamine + 2 ATP + 2 H2O = cob(II)yrinate a,c diamide + 2 L-glutamate + 2 ADP + 2 phosphate + 2 H(+). The protein operates within cofactor biosynthesis; adenosylcobalamin biosynthesis; cob(II)yrinate a,c-diamide from sirohydrochlorin (anaerobic route): step 10/10. Functionally, catalyzes the ATP-dependent amidation of the two carboxylate groups at positions a and c of cobyrinate, using either L-glutamine or ammonia as the nitrogen source. The chain is Cobyrinate a,c-diamide synthase from Priestia megaterium (Bacillus megaterium).